Consider the following 772-residue polypeptide: DNA ligase (772 aa).

NAD(+) contacts are provided by residues 80-84 (DAEYD), 130-131 (SL), and Glu160. Lys162 serves as the catalytic N6-AMP-lysine intermediate. NAD(+)-binding residues include Arg183, Glu220, Lys336, and Lys360. Zn(2+) contacts are provided by Cys454, Cys457, Cys473, and Cys479. One can recognise a BRCT domain in the interval 685-772 (APEQTLEGLT…NGPQGITTIG (88 aa)).

Belongs to the NAD-dependent DNA ligase family. LigA subfamily. Mg(2+) is required as a cofactor. Requires Mn(2+) as cofactor.

It catalyses the reaction NAD(+) + (deoxyribonucleotide)n-3'-hydroxyl + 5'-phospho-(deoxyribonucleotide)m = (deoxyribonucleotide)n+m + AMP + beta-nicotinamide D-nucleotide.. DNA ligase that catalyzes the formation of phosphodiester linkages between 5'-phosphoryl and 3'-hydroxyl groups in double-stranded DNA using NAD as a coenzyme and as the energy source for the reaction. It is essential for DNA replication and repair of damaged DNA. This Cutibacterium acnes (strain DSM 16379 / KPA171202) (Propionibacterium acnes) protein is DNA ligase.